Reading from the N-terminus, the 357-residue chain is 3-isopropylmalate dehydrogenase (357 aa).

Position 76-89 (76-89 (GPQWDTIDPSLRPE)) interacts with NAD(+). Positions 96, 106, 134, and 224 each coordinate substrate. Residues D224, D248, and D252 each contribute to the Mg(2+) site. Residue 282-294 (GSAPDIAGKGIAN) coordinates NAD(+).

Belongs to the isocitrate and isopropylmalate dehydrogenases family. LeuB type 1 subfamily. Homodimer. The cofactor is Mg(2+). Mn(2+) serves as cofactor.

Its subcellular location is the cytoplasm. The enzyme catalyses (2R,3S)-3-isopropylmalate + NAD(+) = 4-methyl-2-oxopentanoate + CO2 + NADH. Its pathway is amino-acid biosynthesis; L-leucine biosynthesis; L-leucine from 3-methyl-2-oxobutanoate: step 3/4. Functionally, catalyzes the oxidation of 3-carboxy-2-hydroxy-4-methylpentanoate (3-isopropylmalate) to 3-carboxy-4-methyl-2-oxopentanoate. The product decarboxylates to 4-methyl-2 oxopentanoate. The protein is 3-isopropylmalate dehydrogenase of Xanthomonas euvesicatoria pv. vesicatoria (strain 85-10) (Xanthomonas campestris pv. vesicatoria).